A 320-amino-acid chain; its full sequence is Cytochrome c biogenesis protein CcsA (320 aa).

Helical transmembrane passes span 14 to 34 (SFFLLFFVTFIYWGKFLYINI), 37 to 57 (ITILGEISMKIACFFITTFLL), 68 to 88 (LSNLYESSMFLSWSFTLIHLI), 97 to 117 (WLGIITAPSAMLTHGFATLSL), 143 to 163 (MMLSYSTLLCGSLLAITILII), 228 to 248 (VISLGFPLLTIGILSGAVWAN), 263 to 283 (WALITWLIFAIYLHTRMIKGW), and 289 to 309 (AIIASLGFFIVWICYLGVNLL).

Belongs to the CcmF/CycK/Ccl1/NrfE/CcsA family. As to quaternary structure, may interact with Ccs1.

It localises to the plastid. It is found in the chloroplast thylakoid membrane. Required during biogenesis of c-type cytochromes (cytochrome c6 and cytochrome f) at the step of heme attachment. The polypeptide is Cytochrome c biogenesis protein CcsA (Marchantia polymorpha (Common liverwort)).